Reading from the N-terminus, the 314-residue chain is Polyadenylate-binding protein-interacting protein 8 (314 aa).

Positions 1–47 are disordered; that stretch reads MAAITEMATDSNDVINDGGTGDGIEKSTDSKPEIESDDLKPKSKPEY. The segment covering 23–47 has biased composition (basic and acidic residues); that stretch reads GIEKSTDSKPEIESDDLKPKSKPEY. The short motif at 59-69 is the PAM2-like element; that stretch reads KLNPEAKEFFP. Positions 99 to 112 match the Bipartite nuclear localization signal motif; sequence RRRRNNYNQGRRVR. RRM domains lie at 128-203 and 225-301; these read RTVY…PSKT and RTIY…PSKT.

Interacts with MPC. As to expression, expressed in cauline leaves, stems, rosette leaves, immature siliques and primary inflorescences but at a low level.

The protein localises to the nucleus. In Arabidopsis thaliana (Mouse-ear cress), this protein is Polyadenylate-binding protein-interacting protein 8 (CID8).